Here is a 358-residue protein sequence, read N- to C-terminus: Phospho-N-acetylmuramoyl-pentapeptide-transferase (358 aa).

10 helical membrane-spanning segments follow: residues 25–45, 73–93, 97–117, 134–154, 172–192, 197–217, 233–253, 261–281, 286–306, and 335–355; these read RTIY…PWVI, TMGG…WADL, YVWT…TDDY, MFWQ…VAGM, YLYI…VNLT, GLAI…AYIA, GAGE…GFLW, VFMG…LAVI, MLLV…IFQV, and KIIV…ISTL.

It belongs to the glycosyltransferase 4 family. MraY subfamily. It depends on Mg(2+) as a cofactor.

The protein resides in the cell inner membrane. The enzyme catalyses UDP-N-acetyl-alpha-D-muramoyl-L-alanyl-gamma-D-glutamyl-meso-2,6-diaminopimeloyl-D-alanyl-D-alanine + di-trans,octa-cis-undecaprenyl phosphate = di-trans,octa-cis-undecaprenyl diphospho-N-acetyl-alpha-D-muramoyl-L-alanyl-D-glutamyl-meso-2,6-diaminopimeloyl-D-alanyl-D-alanine + UMP. It functions in the pathway cell wall biogenesis; peptidoglycan biosynthesis. Its function is as follows. Catalyzes the initial step of the lipid cycle reactions in the biosynthesis of the cell wall peptidoglycan: transfers peptidoglycan precursor phospho-MurNAc-pentapeptide from UDP-MurNAc-pentapeptide onto the lipid carrier undecaprenyl phosphate, yielding undecaprenyl-pyrophosphoryl-MurNAc-pentapeptide, known as lipid I. This Geobacter sulfurreducens (strain ATCC 51573 / DSM 12127 / PCA) protein is Phospho-N-acetylmuramoyl-pentapeptide-transferase.